Reading from the N-terminus, the 222-residue chain is UPF0502 protein SO_1867 (222 aa).

Polar residues predominate over residues 169–193 (EQVSATSLSADSPSADSNSLNAQDR). The segment at 169 to 195 (EQVSATSLSADSPSADSNSLNAQDRQQ) is disordered.

This sequence belongs to the UPF0502 family.

In Shewanella oneidensis (strain ATCC 700550 / JCM 31522 / CIP 106686 / LMG 19005 / NCIMB 14063 / MR-1), this protein is UPF0502 protein SO_1867.